The chain runs to 578 residues: Oxygen sensor histidine kinase response regulator DevS/DosS (578 aa).

GAF domains are found at residues 63–200 (DLEA…GIAV) and 231–369 (EPAT…ALAW). His149 is a binding site for heme. The Histidine kinase domain maps to 383–578 (VLTDRDRIAR…VLRWSAPLSQ (196 aa)). His395 carries the phosphohistidine; by autocatalysis modification.

Requires Mg(2+) as cofactor. It depends on heme as a cofactor.

The protein localises to the cytoplasm. The catalysed reaction is ATP + protein L-histidine = ADP + protein N-phospho-L-histidine.. Member of the two-component regulatory system DevR/DevS (DosR/DosS) involved in onset of the dormancy response. Regulates an approximately 48-member regulon. Required for full induction of the DevR (DosR) regulon; acts later than DosT to positively regulate expression of the DevR regulon during adaptation to anaerobiosis. Characterized as an oxygen sensor; O(2) acts as a switch, with O(2)-bound Fe(2+) protein inactive in autophosphorylation. Has also been suggested to act as a redox sensor, or perhaps as a dual oxygen/redox sensor. Donates a phosphate group to transcriptional regulator DevR (DosR). The polypeptide is Oxygen sensor histidine kinase response regulator DevS/DosS (devS) (Mycobacterium tuberculosis (strain CDC 1551 / Oshkosh)).